The sequence spans 505 residues: ATP synthase subunit alpha (505 aa).

Gly-171–Thr-178 contacts ATP.

It belongs to the ATPase alpha/beta chains family. F-type ATPases have 2 components, CF(1) - the catalytic core - and CF(0) - the membrane proton channel. CF(1) has five subunits: alpha(3), beta(3), gamma(1), delta(1), epsilon(1). CF(0) has three main subunits: a(1), b(2) and c(9-12). The alpha and beta chains form an alternating ring which encloses part of the gamma chain. CF(1) is attached to CF(0) by a central stalk formed by the gamma and epsilon chains, while a peripheral stalk is formed by the delta and b chains.

Its subcellular location is the cell inner membrane. It catalyses the reaction ATP + H2O + 4 H(+)(in) = ADP + phosphate + 5 H(+)(out). Its function is as follows. Produces ATP from ADP in the presence of a proton gradient across the membrane. The alpha chain is a regulatory subunit. This is ATP synthase subunit alpha from Nitratiruptor sp. (strain SB155-2).